We begin with the raw amino-acid sequence, 271 residues long: MVNKMDIIPEITRKSITDLINNKERIDGRSLHEFRDISIETGVISKAEGSSRVKLGNTQIIVGVKPQIGEPFPDTPEMGVILTNSELLPMASPTFEPGPPDERSVELSRVVDRCIRESRMIDLEKLCIIEGSKVWMLFLDLHIIDYDGNLFDAAVLATVAALLDTRIPAAEVEDGEVVINREKMQPLPVNRKALMCTFAKIGNEIVLDPSLEEEDILTARISIGVTEEGSICAMQKGGEGPLTRDDVLKAVSIAVEKVPQLIEYLDKSMTP.

Belongs to the RNase PH family. Rrp42 subfamily. Component of the archaeal exosome complex. Forms a hexameric ring-like arrangement composed of 3 Rrp41-Rrp42 heterodimers. The hexameric ring associates with a trimer of Rrp4 and/or Csl4 subunits.

Its subcellular location is the cytoplasm. In terms of biological role, non-catalytic component of the exosome, which is a complex involved in RNA degradation. Contributes to the structuring of the Rrp41 active site. This is Exosome complex component Rrp42 from Methanothermobacter thermautotrophicus (strain ATCC 29096 / DSM 1053 / JCM 10044 / NBRC 100330 / Delta H) (Methanobacterium thermoautotrophicum).